The following is a 307-amino-acid chain: Oxygen-dependent coproporphyrinogen-III oxidase (307 aa).

Substrate is bound at residue Ser99. His103 and His113 together coordinate a divalent metal cation. Catalysis depends on His113, which acts as the Proton donor. Position 115 to 117 (115 to 117 (NVR)) interacts with substrate. His152 and His182 together coordinate a divalent metal cation. Positions 247–282 (YVEFNLVFDRGTLFGLQSGGRTESILMSMPPVVNWR) are important for dimerization. 265-267 (GGR) provides a ligand contact to substrate.

It belongs to the aerobic coproporphyrinogen-III oxidase family. Homodimer. The cofactor is a divalent metal cation.

It localises to the cytoplasm. The catalysed reaction is coproporphyrinogen III + O2 + 2 H(+) = protoporphyrinogen IX + 2 CO2 + 2 H2O. The protein operates within porphyrin-containing compound metabolism; protoporphyrin-IX biosynthesis; protoporphyrinogen-IX from coproporphyrinogen-III (O2 route): step 1/1. Involved in the heme biosynthesis. Catalyzes the aerobic oxidative decarboxylation of propionate groups of rings A and B of coproporphyrinogen-III to yield the vinyl groups in protoporphyrinogen-IX. The protein is Oxygen-dependent coproporphyrinogen-III oxidase of Paraburkholderia xenovorans (strain LB400).